The following is a 526-amino-acid chain: GMP synthase [glutamine-hydrolyzing] (526 aa).

Residues 4–202 (KILILDFGSQ…VHDICGCDQS (199 aa)) enclose the Glutamine amidotransferase type-1 domain. The active-site Nucleophile is Cys-81. Residues His-176 and Glu-178 contribute to the active site. Positions 203 to 395 (WNMPDYVETA…LGLPHDMVYR (193 aa)) constitute a GMPS ATP-PPase domain. ATP is bound at residue 230 to 236 (SGGVDSS).

Homodimer.

The catalysed reaction is XMP + L-glutamine + ATP + H2O = GMP + L-glutamate + AMP + diphosphate + 2 H(+). It functions in the pathway purine metabolism; GMP biosynthesis; GMP from XMP (L-Gln route): step 1/1. Its function is as follows. Catalyzes the synthesis of GMP from XMP. This chain is GMP synthase [glutamine-hydrolyzing], found in Methylobacillus flagellatus (strain ATCC 51484 / DSM 6875 / VKM B-1610 / KT).